The sequence spans 466 residues: Transcription factor SOX-10 (466 aa).

Disordered regions lie at residues 1-67, 160-200, 213-275, 344-375, and 433-466; these read MAEE…DDDK, LRMQ…QGGA, DHRH…DFGN, TVSP…QPST, and RPLY…LSRP. Residues 23–32 show a composition bias toward low complexity; sequence LSPGSAPSLG. Residue serine 24 is modified to Phosphoserine. Residues 62–102 form a dimerization (DIM) region; sequence EADDDKFPVCIREAVSQVLSGYDWTLVPMPVRVNGASKSKP. The segment at residues 104 to 172 is a DNA-binding region (HMG box); the sequence is VKRPMNAFMV…QHKKDHPDYK (69 aa). Residues 160–173 show a composition bias toward basic and acidic residues; it reads LRMQHKKDHPDYKY. Residues 183 to 200 show a composition bias toward low complexity; it reads AAQGEAECPGGEAEQGGA. A transactivation domain (TAM) region spans residues 228-310; that stretch reads PEHPSGQSHG…LPPNGHPGHV (83 aa). Residues 254-271 are compositionally biased toward basic and acidic residues; it reads ADPKRDGRSLGEGGKPHI. The segment at 353-466 is transactivation domain (TAC); the sequence is KAQVKTETTG…QPVYTTLSRP (114 aa). Polar residues predominate over residues 440–466; it reads SDPSPSGPQSHSPTHWEQPVYTTLSRP.

As to quaternary structure, monomer. Interacts with Armcx3 at the mitochondrial outer membrane surface. Interacts with PAX3. Expressed in oligodendroglia of the spinal tube (at protein level).

The protein resides in the cytoplasm. It is found in the nucleus. The protein localises to the mitochondrion outer membrane. In terms of biological role, transcription factor that plays a central role in developing and mature glia. Specifically activates expression of myelin genes, during oligodendrocyte (OL) maturation, such as DUSP15 and MYRF, thereby playing a central role in oligodendrocyte maturation and CNS myelination. Once induced, MYRF cooperates with SOX10 to implement the myelination program. Transcriptional activator of MITF, acting synergistically with PAX3. Transcriptional activator of MBP, via binding to the gene promoter. The protein is Transcription factor SOX-10 (Sox10) of Mus musculus (Mouse).